We begin with the raw amino-acid sequence, 544 residues long: BTB/POZ domain-containing protein At2g13690 (544 aa).

Disordered regions lie at residues 34–66 (ASPD…PQSS) and 82–111 (LSPG…EEDD). Polar residues predominate over residues 37–55 (DTRSISSRNHIPAKSQQQR). The segment covering 93-103 (DPTVTTMQETE) has biased composition (low complexity). In terms of domain architecture, BTB spans 142–225 (YDARLSLKGR…MFEESNVIIK (84 aa)).

The protein operates within protein modification; protein ubiquitination. Its function is as follows. May act as a substrate-specific adapter of an E3 ubiquitin-protein ligase complex (CUL3-RBX1-BTB) which mediates the ubiquitination and subsequent proteasomal degradation of target proteins. The polypeptide is BTB/POZ domain-containing protein At2g13690 (PRL1-IFG) (Arabidopsis thaliana (Mouse-ear cress)).